Reading from the N-terminus, the 194-residue chain is Bis(5'-nucleosyl)-tetraphosphatase, symmetrical (194 aa).

In terms of domain architecture, HD spans 18–132 (RYNHSLRVAE…IFIADYIEPG (115 aa)). An ADP-binding site is contributed by histidine 21. 3 residues coordinate Fe cation: histidine 21, histidine 50, and aspartate 51. Residues 51 to 54 (DFCK), histidine 83, 109 to 110 (HT), aspartate 127, arginine 133, and 172 to 177 (TVYNKT) contribute to the ADP site. Aspartate 127 serves as a coordination point for Fe cation.

Belongs to the Ap4A hydrolase YqeK family. In terms of assembly, homodimer.

The catalysed reaction is P(1),P(4)-bis(5'-adenosyl) tetraphosphate + H2O = 2 ADP + 2 H(+). Inhibited by EDTA. Functionally, hydrolyzes diadenosine 5',5'''-P1,P4-tetraphosphate (Ap4A) to yield ADP. Can also hydrolyze Ap3A, Ap5A, Ap4G, Ap4U and Gp4G, always releasing ADP or GDP as one of the products, but it exhibits a marked preference for Ap4A, which is mainly exerted at the substrate affinity level. The chain is Bis(5'-nucleosyl)-tetraphosphatase, symmetrical from Staphylococcus aureus (strain NCTC 8325 / PS 47).